Consider the following 469-residue polypeptide: ATP sulfurylase 4, chloroplastic (469 aa).

Residues 1–51 constitute a chloroplast transit peptide; the sequence is MASSAAAIVSGSPFRSSPLIHNHHASRYAPGSISVVSLPRQVSRRGLSVKS.

This sequence belongs to the sulfate adenylyltransferase family. Homotetramer. As to expression, expressed in roots and leaves.

The protein resides in the plastid. The protein localises to the chloroplast stroma. It carries out the reaction sulfate + ATP + H(+) = adenosine 5'-phosphosulfate + diphosphate. It participates in sulfur metabolism; hydrogen sulfide biosynthesis; sulfite from sulfate: step 1/3. In terms of biological role, sulfate adenylyltransferase. Catalyzes the first step of the sulfate assimilation pathway. The sequence is that of ATP sulfurylase 4, chloroplastic (APS4) from Arabidopsis thaliana (Mouse-ear cress).